The following is a 75-amino-acid chain: RNA-binding protein KhpA (75 aa).

The 47-residue stretch at 29–75 (KKVYEIVVNEEDVGQVIGKDGRTIKSLKILLSALMGDSKEITIKVVR) folds into the KH domain.

The protein belongs to the KhpA RNA-binding protein family. As to quaternary structure, forms a complex with KhpB.

It is found in the cytoplasm. Functionally, a probable RNA chaperone. Forms a complex with KhpB which binds to cellular RNA and controls its expression. Plays a role in peptidoglycan (PG) homeostasis and cell length regulation. The protein is RNA-binding protein KhpA of Thermotoga maritima (strain ATCC 43589 / DSM 3109 / JCM 10099 / NBRC 100826 / MSB8).